Here is a 138-residue protein sequence, read N- to C-terminus: Large ribosomal subunit protein uL16 (138 aa).

It belongs to the universal ribosomal protein uL16 family. In terms of assembly, part of the 50S ribosomal subunit.

Functionally, binds 23S rRNA and is also seen to make contacts with the A and possibly P site tRNAs. This Anaeromyxobacter sp. (strain Fw109-5) protein is Large ribosomal subunit protein uL16.